The sequence spans 180 residues: Putative phycocyanobilin lyase CpcS 2 (180 aa).

It belongs to the CpcS/CpeS biliprotein lyase family.

Covalently attaches a chromophore to Cys residue(s) of phycobiliproteins (Potential). In vitro does not act as a chromophore lyase for ApcA1, ApcA2, ApcB, ApcD, ApcF, CpcB or PecB, the lyase activity is therefore unsure. The polypeptide is Putative phycocyanobilin lyase CpcS 2 (cpeS2) (Nostoc sp. (strain PCC 7120 / SAG 25.82 / UTEX 2576)).